The sequence spans 288 residues: Store-operated calcium entry regulator STIMATE (288 aa).

Over 1–28 the chain is Cytoplasmic; sequence MQGPGGNVSRGLPGGPASTVASGAGRCE. 3 helical membrane-spanning segments follow: residues 29-49, 69-89, and 102-122; these read SGAL…VVAF, IWFL…FANV, and LYLI…YVGV. Positions 149–153 match the GXXXG motif motif; that stretch reads GAWVG. Helical transmembrane passes span 156–176 and 194–214; these read ALYI…LLIL and LAIV…WVVD. The Cytoplasmic segment spans residues 215–288; the sequence is NFLMRKGKTK…KKKHRFGLPV (74 aa). A disordered region spans residues 228 to 288; sequence EERGANQDSR…KKKHRFGLPV (61 aa). Residues 241 to 246 form a required for localization in the endoplasmic reticulum region; sequence KVRYRR. The span at 261 to 272 shows a compositional bias: acidic residues; the sequence is ADDEMEESDAEE. Residues 277 to 288 are compositionally biased toward basic residues; sequence PVKKKHRFGLPV.

It belongs to the STIMATE family. As to quaternary structure, homooligomer. Interacts with STIM1.

It localises to the endoplasmic reticulum membrane. Its function is as follows. Acts as a regulator of store-operated Ca(2+) entry (SOCE) at junctional sites that connect the endoplasmic reticulum (ER) and plasma membrane (PM), called ER-plasma membrane (ER-PM) junction or cortical ER. SOCE is a Ca(2+) influx following depletion of intracellular Ca(2+) stores. Acts by interacting with STIM1, promoting STIM1 conformational switch. Involved in STIM1 relocalization to ER-PM junctions. Contributes to the maintenance and reorganization of store-dependent ER-PM junctions. This is Store-operated calcium entry regulator STIMATE from Rattus norvegicus (Rat).